We begin with the raw amino-acid sequence, 1984 residues long: Sodium channel protein type 9 subunit alpha (1984 aa).

At 1–125 (MAMLPPPGPQ…RRISIKILVH (125 aa)) the chain is on the cytoplasmic side. The segment covering 26-47 (RIAEGKTKEPKEEKKDDHDEGP) has biased composition (basic and acidic residues). A disordered region spans residues 26 to 55 (RIAEGKTKEPKEEKKDDHDEGPKPSSDLEA). The stretch at 112 to 408 (FSPLRRISIK…VAMAYEEQNQ (297 aa)) is one I repeat. Residues 126 to 145 (SLFSMLIMCTILTNCIFMTM) form a helical membrane-spanning segment. At 146-150 (NNPAE) the chain is on the extracellular side. Residues 151 to 172 (WTKNVEYTFTGIYTFESLVKIF) traverse the membrane as a helical segment. At 173–185 (ARGFCVGEFTFLR) the chain is on the cytoplasmic side. Residues 186 to 204 (DPWNWLDFIVIVFAYLTEF) traverse the membrane as a helical segment. Residues 205 to 210 (VNLGNV) lie on the Extracellular side of the membrane. N209 carries N-linked (GlcNAc...) asparagine glycosylation. A helical transmembrane segment spans residues 211–227 (SALRTFRVLRALKTISV). Residues 228-241 (IPGLKTIVGALIQS) lie on the Cytoplasmic side of the membrane. Residues 242 to 267 (VKKLSDVIILTVFCLSVFALIGLQLF) form a helical membrane-spanning segment. Over 268–344 (MGHLKHKCLR…PDYGYTSFDT (77 aa)) the chain is Extracellular. C275 and C322 are disulfide-bonded. N-linked (GlcNAc...) asparagine glycosylation occurs at N281. The pore-forming intramembrane region spans 345-361 (FSWAFLALFRLMTQDYW). The Extracellular segment spans residues 362 to 374 (ENLYQQTLRAAGK). Residues 375 to 400 (TYMIFFVVVIFLGSFYLINLILAVVA) form a helical membrane-spanning segment. Residues 401–742 (MAYEEQNQAN…FIYIIVMDPF (342 aa)) are Cytoplasmic-facing. The segment covering 459-469 (SSSETSKLSSK) has biased composition (low complexity). 2 disordered regions span residues 459–517 (SSSE…LGVE) and 563–610 (GSET…PPML). The segment covering 472-484 (KERRNRRKKKNQK) has biased composition (basic residues). Composition is skewed to basic and acidic residues over residues 487-508 (SSGE…ESIS) and 571-583 (DEHS…ESRR). An II repeat occupies 723–986 (CSPFWIKFKK…EEDTDANNLQ (264 aa)). Residues 743-759 (VDLAITICIVLNTLFMA) form a helical membrane-spanning segment. Residues 760 to 768 (MEHHPMTEE) lie on the Extracellular side of the membrane. A helical membrane pass occupies residues 769 to 793 (FKNVLVVGNLVFTGIFAAEMVLKLI). The Cytoplasmic portion of the chain corresponds to 794–802 (AMDPYEYFQ). Residues 803–819 (VGWNVFDSLIVTLSLVE) form a helical membrane-spanning segment. At 820 to 828 (LFLADVEGL) the chain is on the extracellular side. The helical transmembrane segment at 829–845 (SVLRSFRLLRVFKLAKS) threads the bilayer. The Cytoplasmic portion of the chain corresponds to 846-862 (WPTLNMLIKIIGNSVGP). The chain crosses the membrane as a helical span at residues 863-885 (LGNLTLVLAIIVFIFAVVGMQLF). Residues 886 to 912 (GKSYKECVCKINDDCSLPRWHMNDFFH) are Extracellular-facing. A disulfide bond links C894 and C900. An intramembrane region (pore-forming) is located at residues 913-925 (SFLIVFRVLCGEW). The Extracellular segment spans residues 926–937 (IETMWDCMEVAG). C932 and C941 are joined by a disulfide. The helical transmembrane segment at 938–964 (QAMCLIVYMMVMVIGNLVVLNLFLALL) threads the bilayer. Residues 965 to 1184 (LSSFSSDNLS…WWNIRKTCYR (220 aa)) are Cytoplasmic-facing. The disordered stretch occupies residues 1087–1146 (PIAPGESDLENMNTEELSSDSESEYSKERLNRSSSSECSTVDNALPGEGEEAEAEPVNSD). Polar residues predominate over residues 1118–1128 (RSSSSECSTVD). The segment covering 1134–1146 (EGEEAEAEPVNSD) has biased composition (acidic residues). One copy of the III repeat lies at 1177–1485 (NIRKTCYRIV…KKYYNAMKKL (309 aa)). The helical transmembrane segment at 1185–1209 (IVEHSWFESFIVLMILLSSGALAFE) threads the bilayer. Residues 1210-1221 (DIYIEKKKTIKI) are Extracellular-facing. The chain crosses the membrane as a helical span at residues 1222-1247 (ILEYADKIFTYIFILEMLLKWVAYGY). The Cytoplasmic portion of the chain corresponds to 1248–1249 (KT). A helical transmembrane segment spans residues 1250–1275 (YFTNAWCWLDFLIVDVSLVTLVANTL). Topologically, residues 1276-1284 (GYSDLGPIK) are extracellular. Residues 1285-1301 (SLRTLRALRPLRALSRF) form a helical membrane-spanning segment. Over 1302–1314 (EGMRVVVNALIGA) the chain is Cytoplasmic. A helical transmembrane segment spans residues 1315 to 1339 (IPSIMNVLLVCLIFWLIFSIMGVNL). Topologically, residues 1340 to 1391 (FAGKFYQCVNTTDDSRFPTKQVSNRSECFALMNGSQNVRWKNLKVNFDNVGL) are extracellular. C1347 and C1367 form a disulfide bridge. 3 N-linked (GlcNAc...) asparagine glycosylation sites follow: N1349, N1363, and N1372. The segment at residues 1392-1402 (RYLSLLQVATF) is an intramembrane region (pore-forming). The Extracellular portion of the chain corresponds to 1403-1428 (KGWMDIMYAAVDSVNVDQQPSYEHNL). The helical transmembrane segment at 1429–1454 (YMYIYFVIFIIFGSFFTLNLFIGVII) threads the bilayer. The Cytoplasmic segment spans residues 1455–1511 (DNFNQQKKKLGGQDIFMTEEQKKYYNAMKKLGSKKPQKPIPRPGNKFQGCIFDLVTN). S1487 carries the phosphoserine; by PKC modification. The IV repeat unit spans residues 1494–1792 (IPRPGNKFQG…WEKFDPDATQ (299 aa)). A helical membrane pass occupies residues 1512-1531 (QAFDITIMILICLNMVTMMV). The Extracellular segment spans residues 1532–1542 (EKEGQSDYMTD). The helical transmembrane segment at 1543-1564 (VLYWINVVFIILFTGECVLKLI) threads the bilayer. The Cytoplasmic segment spans residues 1565–1573 (SLRHYYFTI). The helical transmembrane segment at 1574 to 1595 (GWNIFDFVVVILSIVGMFLAEL) threads the bilayer. Residues 1596-1604 (IETYFVSPT) lie on the Extracellular side of the membrane. The helical transmembrane segment at 1605–1624 (LFRVIRLARIGRILRLIKGA) threads the bilayer. Over 1625–1637 (KGIRTLLFALMMS) the chain is Cytoplasmic. Residues 1638 to 1660 (LPALFNIGLLLFLVMFIYAIFGM) traverse the membrane as a helical segment. Topologically, residues 1661–1683 (SNFAYVKKEAGINDMFNFETFGN) are extracellular. An intramembrane region (pore-forming) is located at residues 1684 to 1696 (SMICLFQITTSAG). The Extracellular segment spans residues 1697 to 1730 (WDGLLAPILNSAPPDCDPKKVHPGSSTEGDCGSP). A disulfide bond links C1712 and C1727. The chain crosses the membrane as a helical span at residues 1731 to 1756 (SVGIFYFVSYIIISFLVVVNMYIAVI). Topologically, residues 1757 to 1984 (LENFSVATEE…KGKDGKETKK (228 aa)) are cytoplasmic. The IQ domain maps to 1886-1915 (EDVSATVIQRAYRRYRLRQNVKNISSIYIK). Residues 1924–1984 (PNKGDIVFDN…KGKDGKETKK (61 aa)) are disordered. The span at 1933 to 1956 (NVNSSSPEKTDATASTISPPSYDS) shows a compositional bias: polar residues. The segment covering 1958–1984 (TKPDKEKYEKDKTEKEDKGKDGKETKK) has biased composition (basic and acidic residues).

It belongs to the sodium channel (TC 1.A.1.10) family. Nav1.7/SCN9A subfamily. In terms of assembly, the Nav1.7 voltage-gated sodium channel consists of an ion-conducting alpha subunit SCN9A which is functional on its own regulated by one or more beta-1 (SCN1B), beta-2 (SCN2B), beta-3 (SCN3B) and beta-4 (SCN4B) subunits. SCN1B and SCN3B are non-covalently associated with SCN9A. SCN2B and SCN4B are disulfide-linked to SCN9A. SCN1B regulates channel inactivation. Interacts with NEDD4 and NEDD4L; regulates Nav1.7 activity most probably through ubiquitination and subsequent endocytosis. Interacts with TMEM233; modulates the gating properties of NaV1.7. Post-translationally, phosphorylation at Ser-1487 by PKC in a highly conserved cytoplasmic loop increases peak sodium currents. In terms of processing, ubiquitinated by NEDD4L; which may promote its endocytosis. As to expression, expressed in the sciatic nerve, spinal cord, brainstem, cerebellum and cortex, but not expressed in the lung, skeletal and cardiac muscles, kidney and liver.

It localises to the cell membrane. It is found in the cell projection. The protein localises to the neuron projection. Its subcellular location is the axon. It catalyses the reaction Na(+)(in) = Na(+)(out). In terms of biological role, pore-forming subunit of Nav1.7, a voltage-gated sodium (Nav) channel that directly mediates the depolarizing phase of action potentials in excitable membranes. Navs, also called VGSCs (voltage-gated sodium channels) or VDSCs (voltage-dependent sodium channels), operate by switching between closed and open conformations depending on the voltage difference across the membrane. In the open conformation they allow Na(+) ions to selectively pass through the pore, along their electrochemical gradient. The influx of Na(+) ions provokes membrane depolarization, initiating the propagation of electrical signals throughout cells and tissues. Nav1.7 plays a crucial role in controlling the excitability and action potential propagation from nociceptor neurons, thereby contributing to the sensory perception of pain. This is Sodium channel protein type 9 subunit alpha from Oryctolagus cuniculus (Rabbit).